We begin with the raw amino-acid sequence, 185 residues long: Elongation factor P (185 aa).

The protein belongs to the elongation factor P family.

Its subcellular location is the cytoplasm. It functions in the pathway protein biosynthesis; polypeptide chain elongation. Functionally, involved in peptide bond synthesis. Stimulates efficient translation and peptide-bond synthesis on native or reconstituted 70S ribosomes in vitro. Probably functions indirectly by altering the affinity of the ribosome for aminoacyl-tRNA, thus increasing their reactivity as acceptors for peptidyl transferase. This Clostridium botulinum (strain ATCC 19397 / Type A) protein is Elongation factor P.